The primary structure comprises 294 residues: Cytidine deaminase (294 aa).

2 consecutive CMP/dCMP-type deaminase domains span residues 48–168 (DEDA…FGPK) and 186–294 (LTGD…VLLG). 89-91 (NME) contacts substrate. Histidine 102 provides a ligand contact to Zn(2+). Catalysis depends on glutamate 104, which acts as the Proton donor. 2 residues coordinate Zn(2+): cysteine 129 and cysteine 132.

It belongs to the cytidine and deoxycytidylate deaminase family. As to quaternary structure, homodimer. Zn(2+) is required as a cofactor.

The catalysed reaction is cytidine + H2O + H(+) = uridine + NH4(+). The enzyme catalyses 2'-deoxycytidine + H2O + H(+) = 2'-deoxyuridine + NH4(+). Its function is as follows. This enzyme scavenges exogenous and endogenous cytidine and 2'-deoxycytidine for UMP synthesis. This Salmonella schwarzengrund (strain CVM19633) protein is Cytidine deaminase.